Here is a 201-residue protein sequence, read N- to C-terminus: MSTEAQRVDDSPSTSGGSSDGDQRESVQQEPDREQVQPKKKEGKISSKTAAKLSTSAKRIQKELAEITLDPPPNCSAGPKGDNIYEWRSTILGPPGSVYEGGVFFLDITFSPDYPFKPPKVTFRTRIYHCNINSQGVICLDILKDNWSPALTISKVLLSICSLLTDCNPADPLVGSIATQYMTNRAEHDRMARQWTKRYAT.

Over residues Met-1–Asp-10 the composition is skewed to basic and acidic residues. The interval Met-1 to Thr-55 is disordered. Position 2 is an N-acetylserine (Ser-2). Phosphoserine occurs at positions 11, 15, 18, and 19. The span at Gly-21–Ile-45 shows a compositional bias: basic and acidic residues. Low complexity predominate over residues Ser-46–Thr-55. Residues Thr-55–Thr-201 enclose the UBC core domain. The active-site Glycyl thioester intermediate is Cys-139.

Belongs to the ubiquitin-conjugating enzyme family. Autoubiquitinated.

The enzyme catalyses S-ubiquitinyl-[E1 ubiquitin-activating enzyme]-L-cysteine + [E2 ubiquitin-conjugating enzyme]-L-cysteine = [E1 ubiquitin-activating enzyme]-L-cysteine + S-ubiquitinyl-[E2 ubiquitin-conjugating enzyme]-L-cysteine.. It functions in the pathway protein modification; protein ubiquitination. Its function is as follows. Accepts ubiquitin from the E1 complex and catalyzes its covalent attachment to other proteins. In vitro catalyzes 'Lys-11'- and 'Lys-48'-, as well as 'Lys-63'-linked polyubiquitination. Catalyzes the ISGylation of influenza A virus NS1 protein. The chain is Ubiquitin-conjugating enzyme E2 E2 (Ube2e2) from Mus musculus (Mouse).